A 284-amino-acid chain; its full sequence is Diaminopimelate epimerase (284 aa).

3 residues coordinate substrate: N21, Q54, and N74. C83 serves as the catalytic Proton donor. Substrate contacts are provided by residues 84–85 (GN), N167, N200, and 218–219 (ER). The active-site Proton acceptor is the C227. A substrate-binding site is contributed by 228-229 (GS).

Belongs to the diaminopimelate epimerase family. Homodimer.

The protein localises to the cytoplasm. It carries out the reaction (2S,6S)-2,6-diaminopimelate = meso-2,6-diaminopimelate. It participates in amino-acid biosynthesis; L-lysine biosynthesis via DAP pathway; DL-2,6-diaminopimelate from LL-2,6-diaminopimelate: step 1/1. Its function is as follows. Catalyzes the stereoinversion of LL-2,6-diaminopimelate (L,L-DAP) to meso-diaminopimelate (meso-DAP), a precursor of L-lysine and an essential component of the bacterial peptidoglycan. The chain is Diaminopimelate epimerase from Buchnera aphidicola subsp. Acyrthosiphon pisum (strain APS) (Acyrthosiphon pisum symbiotic bacterium).